Reading from the N-terminus, the 129-residue chain is Cytochrome c oxidase subunit 5B, mitochondrial (129 aa).

The transit peptide at 1-31 (MASRLLRGAGALAAQTLRARGPNGVAVVRSM) directs the protein to the mitochondrion. 2 positions are modified to N6-acetyllysine: lysine 68 and lysine 86. 4 residues coordinate Zn(2+): cysteine 91, cysteine 93, cysteine 113, and cysteine 116. The residue at position 121 (lysine 121) is an N6-acetyllysine.

Belongs to the cytochrome c oxidase subunit 5B family. In terms of assembly, component of the cytochrome c oxidase (complex IV, CIV), a multisubunit enzyme composed of 14 subunits. The complex is composed of a catalytic core of 3 subunits MT-CO1, MT-CO2 and MT-CO3, encoded in the mitochondrial DNA, and 11 supernumerary subunits COX4I, COX5A, COX5B, COX6A, COX6B, COX6C, COX7A, COX7B, COX7C, COX8 and NDUFA4, which are encoded in the nuclear genome. The complex exists as a monomer or a dimer and forms supercomplexes (SCs) in the inner mitochondrial membrane with NADH-ubiquinone oxidoreductase (complex I, CI) and ubiquinol-cytochrome c oxidoreductase (cytochrome b-c1 complex, complex III, CIII), resulting in different assemblies (supercomplex SCI(1)III(2)IV(1) and megacomplex MCI(2)III(2)IV(2)).

Its subcellular location is the mitochondrion inner membrane. Its pathway is energy metabolism; oxidative phosphorylation. Component of the cytochrome c oxidase, the last enzyme in the mitochondrial electron transport chain which drives oxidative phosphorylation. The respiratory chain contains 3 multisubunit complexes succinate dehydrogenase (complex II, CII), ubiquinol-cytochrome c oxidoreductase (cytochrome b-c1 complex, complex III, CIII) and cytochrome c oxidase (complex IV, CIV), that cooperate to transfer electrons derived from NADH and succinate to molecular oxygen, creating an electrochemical gradient over the inner membrane that drives transmembrane transport and the ATP synthase. Cytochrome c oxidase is the component of the respiratory chain that catalyzes the reduction of oxygen to water. Electrons originating from reduced cytochrome c in the intermembrane space (IMS) are transferred via the dinuclear copper A center (CU(A)) of subunit 2 and heme A of subunit 1 to the active site in subunit 1, a binuclear center (BNC) formed by heme A3 and copper B (CU(B)). The BNC reduces molecular oxygen to 2 water molecules using 4 electrons from cytochrome c in the IMS and 4 protons from the mitochondrial matrix. The sequence is that of Cytochrome c oxidase subunit 5B, mitochondrial (COX5B) from Sus scrofa (Pig).